A 320-amino-acid polypeptide reads, in one-letter code: Ferrochelatase (320 aa).

Fe cation is bound by residues H194 and E275.

Belongs to the ferrochelatase family. Monomer.

It is found in the cytoplasm. It carries out the reaction heme b + 2 H(+) = protoporphyrin IX + Fe(2+). Its pathway is porphyrin-containing compound metabolism; protoheme biosynthesis; protoheme from protoporphyrin-IX: step 1/1. Its function is as follows. Catalyzes the ferrous insertion into protoporphyrin IX. The sequence is that of Ferrochelatase from Shigella boydii serotype 18 (strain CDC 3083-94 / BS512).